The sequence spans 162 residues: Serine-protein kinase RsbW (162 aa).

Belongs to the anti-sigma-factor family.

It catalyses the reaction L-seryl-[protein] + ATP = O-phospho-L-seryl-[protein] + ADP + H(+). It carries out the reaction L-threonyl-[protein] + ATP = O-phospho-L-threonyl-[protein] + ADP + H(+). In terms of biological role, negative regulator of sigma-B activity. Phosphorylates and inactivates its specific antagonist protein, RsbV. Upon phosphorylation of RsbV, RsbW is released and binds to sigma-B, thereby blocking its ability to form an RNA polymerase holoenzyme (E-sigma-B). This Halalkalibacterium halodurans (strain ATCC BAA-125 / DSM 18197 / FERM 7344 / JCM 9153 / C-125) (Bacillus halodurans) protein is Serine-protein kinase RsbW.